The primary structure comprises 335 residues: tRNA (adenine(58)-N(1))-methyltransferase catalytic subunit TRM61 (335 aa).

Residues 114–116, E135, R140, 162–163, and D183 each bind S-adenosyl-L-methionine; these read SAS and DV. Over residues 271–281 the composition is skewed to basic and acidic residues; sequence VMKKGPSEEPP. The tract at residues 271–302 is disordered; the sequence is VMKKGPSEEPPAKLQKTDNGYKTPKKSTKVKE.

The protein belongs to the class I-like SAM-binding methyltransferase superfamily. TRM61 family. In terms of assembly, heterotetramer; composed of two copies of TRM6 and two copies of TRM61.

Its subcellular location is the nucleus. The enzyme catalyses adenosine(58) in tRNA + S-adenosyl-L-methionine = N(1)-methyladenosine(58) in tRNA + S-adenosyl-L-homocysteine + H(+). Catalytic subunit of tRNA (adenine-N(1)-)-methyltransferase, which catalyzes the formation of N(1)-methyladenine at position 58 (m1A58) in initiator methionyl-tRNA. This chain is tRNA (adenine(58)-N(1))-methyltransferase catalytic subunit TRM61 (TRM61), found in Candida albicans (strain SC5314 / ATCC MYA-2876) (Yeast).